Consider the following 354-residue polypeptide: Uroporphyrinogen decarboxylase (354 aa).

Residues 27 to 31, aspartate 77, tyrosine 154, threonine 209, and histidine 327 each bind substrate; that span reads RQAGR.

Belongs to the uroporphyrinogen decarboxylase family. Homodimer.

It is found in the cytoplasm. It carries out the reaction uroporphyrinogen III + 4 H(+) = coproporphyrinogen III + 4 CO2. It participates in porphyrin-containing compound metabolism; protoporphyrin-IX biosynthesis; coproporphyrinogen-III from 5-aminolevulinate: step 4/4. Functionally, catalyzes the decarboxylation of four acetate groups of uroporphyrinogen-III to yield coproporphyrinogen-III. This is Uroporphyrinogen decarboxylase from Serratia proteamaculans (strain 568).